The following is a 154-amino-acid chain: Deoxyuridine 5'-triphosphate nucleotidohydrolase (154 aa).

Residues 74–76, N87, 91–93, and K101 contribute to the substrate site; these read RSG and TID.

This sequence belongs to the dUTPase family. Mg(2+) is required as a cofactor.

The enzyme catalyses dUTP + H2O = dUMP + diphosphate + H(+). It functions in the pathway pyrimidine metabolism; dUMP biosynthesis; dUMP from dCTP (dUTP route): step 2/2. In terms of biological role, this enzyme is involved in nucleotide metabolism: it produces dUMP, the immediate precursor of thymidine nucleotides and it decreases the intracellular concentration of dUTP so that uracil cannot be incorporated into DNA. This is Deoxyuridine 5'-triphosphate nucleotidohydrolase from Cytophaga hutchinsonii (strain ATCC 33406 / DSM 1761 / CIP 103989 / NBRC 15051 / NCIMB 9469 / D465).